The following is a 463-amino-acid chain: SPARC-related modular calcium-binding protein 1 (463 aa).

A signal peptide spans Met1–Gly25. The Kazal-like domain occupies Ser36–Asp88. Cystine bridges form between Cys42–Cys73, Cys46–Cys66, Cys55–Cys86, Cys94–Cys117, Cys128–Cys135, and Cys137–Cys157. The Thyroglobulin type-1 1 domain occupies Gln91–Cys157. N-linked (GlcNAc...) asparagine glycosylation is present at Asn224. Residues Val234 to Cys302 enclose the Thyroglobulin type-1 2 domain. Disulfide bonds link Cys237–Cys261, Cys272–Cys279, and Cys281–Cys302. EF-hand domains follow at residues Leu369–Lys404 and Lys406–Gly441. The Ca(2+) site is built by Asp382, Asn384, Ser386, Asp388, Glu393, Asp419, Asn421, Asp423, and Glu430. The N-linked (GlcNAc...) asparagine glycan is linked to Asn384.

In terms of processing, glycosylated. Widely expressed in many tissues with a strongest signal in ovary.

The protein resides in the secreted. The protein localises to the extracellular space. It localises to the extracellular matrix. Its subcellular location is the basement membrane. In terms of biological role, probable regulator of osteoblast differentiation. Plays essential roles in both eye and limb development. In Mus musculus (Mouse), this protein is SPARC-related modular calcium-binding protein 1 (Smoc1).